The following is a 170-amino-acid chain: uncharacterized protein (170 aa).

Residues 1-26 (MLKKKWMVGLLAGCLAAGGFSYNAFA) form the signal peptide.

This is an uncharacterized protein from Bacillus subtilis (strain 168).